The following is a 214-amino-acid chain: Probable transaldolase (214 aa).

Catalysis depends on Lys-83, which acts as the Schiff-base intermediate with substrate.

It belongs to the transaldolase family. Type 3B subfamily.

It localises to the cytoplasm. The enzyme catalyses D-sedoheptulose 7-phosphate + D-glyceraldehyde 3-phosphate = D-erythrose 4-phosphate + beta-D-fructose 6-phosphate. It participates in carbohydrate degradation; pentose phosphate pathway; D-glyceraldehyde 3-phosphate and beta-D-fructose 6-phosphate from D-ribose 5-phosphate and D-xylulose 5-phosphate (non-oxidative stage): step 2/3. Its function is as follows. Transaldolase is important for the balance of metabolites in the pentose-phosphate pathway. The sequence is that of Probable transaldolase from Desulfotalea psychrophila (strain LSv54 / DSM 12343).